A 99-amino-acid chain; its full sequence is Large ribosomal subunit protein uL23 (99 aa).

Belongs to the universal ribosomal protein uL23 family. As to quaternary structure, part of the 50S ribosomal subunit. Contacts protein L29, and trigger factor when it is bound to the ribosome.

Functionally, one of the early assembly proteins it binds 23S rRNA. One of the proteins that surrounds the polypeptide exit tunnel on the outside of the ribosome. Forms the main docking site for trigger factor binding to the ribosome. The polypeptide is Large ribosomal subunit protein uL23 (Leifsonia xyli subsp. xyli (strain CTCB07)).